The following is a 557-amino-acid chain: MVLSDIEIANSVTMEPISKVADQLGIDKEALCLYGKYKAKIDARQLVALKNKPDGKLILVTAISPTPAGEGKTTTSVGLVDALSAIGKKAVIALREPSLGPVFGVKGGAAGGGHAQVVPMEDINLHFTGDFHAIGVANNLLAALIDNHIHHGNSLGIDSRRITWKRVVDMNDRQLRHIVDGLQGKVNGVPREDGYDITVASEIMAILCLSENISDLKAHLEKIIIGYNFQGEPVTAKDLKAGGALAALLKDAIHPNLVQTLEHTPALIHGGPFANIAHGCNSVLATKLALKYGDYAVTEAGFGADLGAEKFIDIKCRMSGLRPAAVVLVATIRALKMHGGVPKADLATENVQAVVDGLPNLDKHLANIQDVYGLPVVVAINKFPLDTDAELQAVYDACDKRGVDVVISDVWANGGAGGRELAEKVVALAEQDNQFRFVYNEDDSIETKLTKIVTKVYGGKGIKLTPTAKRELAELERLGFGNYPICMAKTQYSFSDDAKKLGAPTDFIVTISNLKVSAGAGFIVALTGAIMTMPGLPKVPASETIDIDEEGNITGLF.

Residue 66–73 coordinates ATP; the sequence is TPAGEGKT.

This sequence belongs to the formate--tetrahydrofolate ligase family.

The enzyme catalyses (6S)-5,6,7,8-tetrahydrofolate + formate + ATP = (6R)-10-formyltetrahydrofolate + ADP + phosphate. Its pathway is one-carbon metabolism; tetrahydrofolate interconversion. In Streptococcus pyogenes serotype M12 (strain MGAS9429), this protein is Formate--tetrahydrofolate ligase 2.